A 489-amino-acid polypeptide reads, in one-letter code: Monocarboxylate transporter 2 (489 aa).

Residues 1–21 (MPSESSVKATAAPPPFPLPPD) lie on the Cytoplasmic side of the membrane. A helical membrane pass occupies residues 22–42 (GGWGWVVVCASFISIGFSYAF). The Extracellular segment spans residues 43–65 (PKAVTVFFNDIKDIFKTTSSQIA). Residues 66-86 (WISSIMLAVMYAGGPISSVLV) form a helical membrane-spanning segment. Topologically, residues 87-95 (NNYGSRPVV) are cytoplasmic. A helical transmembrane segment spans residues 96–116 (IVGGLLCCTGMILASFSSSVI). Residues 117–121 (ELYLT) are Extracellular-facing. Residues 122–142 (VGFIGGLGLAFNLQPALTIIG) form a helical membrane-spanning segment. Topologically, residues 143–154 (KYFYRKRPLANG) are cytoplasmic. Residues 155 to 175 (FAMAGSPVFLSTLAPFNQFLF) traverse the membrane as a helical segment. Topologically, residues 176–179 (NSYG) are extracellular. Residues 180-200 (WKGSFLILGAIFLHSCVAGCL) form a helical membrane-spanning segment. Residues 201 to 250 (MRPVGPSPRAAKSKSKVGSRQDSSTKRLSKVSTAEKINRFLDFGLFTHRG) are Cytoplasmic-facing. Residues 206 to 227 (PSPRAAKSKSKVGSRQDSSTKR) are disordered. The helical transmembrane segment at 251 to 271 (FLIYLSGNVVLFLGMFAPIIF) threads the bilayer. The Extracellular segment spans residues 272–286 (LAPYAKDKGVDDYNS). Residues 287–307 (AFLLSVMAFTDMFARPSVGLI) form a helical membrane-spanning segment. The Cytoplasmic segment spans residues 308-316 (ANTSLIRPR). A helical membrane pass occupies residues 317 to 337 (IQYLFSVAIMFTGICHLLCPL). The Extracellular segment spans residues 338 to 342 (AHSYT). The chain crosses the membrane as a helical span at residues 343 to 363 (ALVVYVIFFGIGFGSISSLLF). Residues 364–377 (ECLMDQVGASRFSS) are Cytoplasmic-facing. The chain crosses the membrane as a helical span at residues 378 to 398 (AVGLVTIVECCPVLFGPPLAG). Over 399–410 (KLLDITGQYKYL) the chain is Extracellular. A helical transmembrane segment spans residues 411–431 (YIASGIVVLSSGIYLLICNAI). At 432–489 (NYRLLEKERKREKARRKKSASQASKEMEALSRSKQDDVTVKVSNTHNPPSDRDKESSI) the chain is on the cytoplasmic side. Residues 441–489 (KREKARRKKSASQASKEMEALSRSKQDDVTVKVSNTHNPPSDRDKESSI) are disordered. Composition is skewed to basic and acidic residues over residues 456 to 470 (KEME…DDVT) and 480 to 489 (PSDRDKESSI).

The protein belongs to the major facilitator superfamily. Monocarboxylate porter (TC 2.A.1.13) family. In terms of assembly, homodimer. Interacts with GRID2IP. Interacts with EMB; interaction mediates SLC16A7 targeting to the plasma membrane. Interacts with isoform 2 of BSG. Detected in brain and kidney (at protein level).

It localises to the cell membrane. The protein localises to the basolateral cell membrane. It is found in the cytoplasm. The catalysed reaction is 3-methyl-2-oxobutanoate(out) + H(+)(out) = 3-methyl-2-oxobutanoate(in) + H(+)(in). It carries out the reaction (S)-lactate(in) + H(+)(in) = (S)-lactate(out) + H(+)(out). The enzyme catalyses acetoacetate(out) + H(+)(out) = acetoacetate(in) + H(+)(in). It catalyses the reaction (R)-3-hydroxybutanoate(out) + H(+)(out) = (R)-3-hydroxybutanoate(in) + H(+)(in). The catalysed reaction is 4-methyl-2-oxopentanoate(out) + H(+)(out) = 4-methyl-2-oxopentanoate(in) + H(+)(in). It carries out the reaction pyruvate(out) + H(+)(out) = pyruvate(in) + H(+)(in). The enzyme catalyses (S)-3-hydroxybutanoate(out) + H(+)(out) = (S)-3-hydroxybutanoate(in) + H(+)(in). Transport activity exhibits steep dependence on substrate concentration. Substrate concentration sensitivity of SLC16A7 arises from the strong inter-subunit cooperativity of the SLC16A7 dimer during transport. Inhibited by AR-C155858. Proton-coupled monocarboxylate symporter. Catalyzes the rapid transport across the plasma membrane of monocarboxylates such as L-lactate, pyruvate and ketone bodies, acetoacetate, beta-hydroxybutyrate and acetate. Dimerization is functionally required and both subunits work cooperatively in transporting substrate. This chain is Monocarboxylate transporter 2 (Slc16a7), found in Rattus norvegicus (Rat).